A 218-amino-acid polypeptide reads, in one-letter code: Zinc finger CCHC-type and RNA-binding motif-containing protein 1 (218 aa).

In terms of domain architecture, RRM spans 10-88 (STVYVSNLPF…RAIKASIAKD (79 aa)). Residues 105–122 (SRCYECGDTGHLSYACPK) form a CCHC-type zinc finger. Positions 119–218 (ACPKNMLGER…YFSDEDELSD (100 aa)) are disordered. Residues 132–188 (QKKEKKKRKRLVEEEEEEVVEEEESEDEGEDPALDSLSQAIAFQQARIDEEKNKYRH) adopt a coiled-coil conformation. Residues 144–164 (EEEEEEVVEEEESEDEGEDPA) are compositionally biased toward acidic residues. The segment covering 178–201 (RIDEEKNKYRHDPAEASTSEDSRR) has biased composition (basic and acidic residues).

Component of the U11/U12 snRNPs that are part of the U12-type spliceosome.

Its subcellular location is the nucleus. The protein is Zinc finger CCHC-type and RNA-binding motif-containing protein 1 (zcrb1) of Xenopus laevis (African clawed frog).